The sequence spans 1712 residues: MGRDQRAVAGPALRRWLLLGTVTVGFLAQSVLAGVKKFDVPCGGRDCSGGCQCYPEKGGRGQPGPVGPQGYNGPPGLQGFPGLQGRKGDKGERGAPGVTGPKGDVGARGVSGFPGADGIPGHPGQGGPRGRPGYDGCNGTQGDSGPQGPPGSEGFTGPPGPQGPKGQKGEPYALPKEERDRYRGEPGEPGLVGFQGPPGRPGHVGQMGPVGAPGRPGPPGPPGPKGQQGNRGLGFYGVKGEKGDVGQPGPNGIPSDTLHPIIAPTGVTFHPDQYKGEKGSEGEPGIRGISLKGEEGIMGFPGLRGYPGLSGEKGSPGQKGSRGLDGYQGPDGPRGPKGEAGDPGPPGLPAYSPHPSLAKGARGDPGFPGAQGEPGSQGEPGDPGLPGPPGLSIGDGDQRRGLPGEMGPKGFIGDPGIPALYGGPPGPDGKRGPPGPPGLPGPPGPDGFLFGLKGAKGRAGFPGLPGSPGARGPKGWKGDAGECRCTEGDEAIKGLPGLPGPKGFAGINGEPGRKGDRGDPGQHGLPGFPGLKGVPGNIGAPGPKGAKGDSRTITTKGERGQPGVPGVPGMKGDDGSPGRDGLDGFPGLPGPPGDGIKGPPGDPGYPGIPGTKGTPGEMGPPGLGLPGLKGQRGFPGDAGLPGPPGFLGPPGPAGTPGQIDCDTDVKRAVGGDRQEAIQPGCIGGPKGLPGLPGPPGPTGAKGLRGIPGFAGADGGPGPRGLPGDAGREGFPGPPGFIGPRGSKGAVGLPGPDGSPGPIGLPGPDGPPGERGLPGEVLGAQPGPRGDAGVPGQPGLKGLPGDRGPPGFRGSQGMPGMPGLKGQPGLPGPSGQPGLYGPPGLHGFPGAPGQEGPLGLPGIPGREGLPGDRGDPGDTGAPGPVGMKGLSGDRGDAGFTGEQGHPGSPGFKGIDGMPGTPGLKGDRGSPGMDGFQGMPGLKGRPGFPGSKGEAGFFGIPGLKGLAGEPGFKGSRGDPGPPGPPPVILPGMKDIKGEKGDEGPMGLKGYLGAKGIQGMPGIPGLSGIPGLPGRPGHIKGVKGDIGVPGIPGLPGFPGVAGPPGITGFPGFIGSRGDKGAPGRAGLYGEIGATGDFGDIGDTINLPGRPGLKGERGTTGIPGLKGFFGEKGTEGDIGFPGITGVTGVQGPPGLKGQTGFPGLTGPPGSQGELGRIGLPGGKGDDGWPGAPGLPGFPGLRGIRGLHGLPGTKGFPGSPGSDIHGDPGFPGPPGERGDPGEANTLPGPVGVPGQKGDQGAPGERGPPGSPGLQGFPGITPPSNISGAPGDKGAPGIFGLKGYRGPPGPPGSAALPGSKGDTGNPGAPGTPGTKGWAGDSGPQGRPGVFGLPGEKGPRGEQGFMGNTGPTGAVGDRGPKGPKGDPGFPGAPGTVGAPGIAGIPQKIAVQPGTVGPQGRRGPPGAPGEMGPQGPPGEPGFRGAPGKAGPQGRGGVSAVPGFRGDEGPIGHQGPIGQEGAPGRPGSPGLPGMPGRSVSIGYLLVKHSQTDQEPMCPVGMNKLWSGYSLLYFEGQEKAHNQDLGLAGSCLARFSTMPFLYCNPGDVCYYASRNDKSYWLSTTAPLPMMPVAEDEIKPYISRCSVCEAPAIAIAVHSQDVSIPHCPAGWRSLWIGYSFLMHTAAGDEGGGQSLVSPGSCLEDFRATPFIECNGGRGTCHYYANKYSFWLTTIPEQSFQGSPSADTLKAGLIRTHISRCQVCMKNL.

Positions 1–25 are cleaved as a signal peptide; the sequence is MGRDQRAVAGPALRRWLLLGTVTVG. Positions 26–183 are cleaved as a propeptide — N-terminal propeptide (7S domain); it reads FLAQSVLAGV…LPKEERDRYR (158 aa). Disordered regions lie at residues 60 to 237, 302 to 448, 507 to 640, 690 to 906, and 1157 to 1480; these read RGQP…GFYG, GLRG…PDGF, INGE…DAGL, GLPG…SPGF, and TGPP…GLPG. A compositionally biased stretch (low complexity) spans 68-84; that stretch reads PQGYNGPPGLQGFPGLQ. Positions 121–130 are enriched in gly residues; sequence GHPGQGGPRG. Asparagine 138 carries an N-linked (GlcNAc...) asparagine glycan. Residues 140 to 153 show a composition bias toward low complexity; sequence TQGDSGPQGPPGSE. Residues 175 to 186 are compositionally biased toward basic and acidic residues; it reads PKEERDRYRGEP. The segment at 184–1484 is triple-helical region; the sequence is GEPGEPGLVG…SPGLPGMPGR (1301 aa). Composition is skewed to pro residues over residues 215-224 and 433-445; these read RPGPPGPPGP and PPGP…PPGP. Composition is skewed to basic and acidic residues over residues 511–520 and 571–582; these read PGRKGDRGDP and KGDDGSPGRDGL. 2 stretches are compositionally biased toward low complexity: residues 628–640 and 698–710; these read LKGQ…DAGL and TGAK…PGFA. The segment covering 711-720 has biased composition (gly residues); sequence GADGGPGPRG. Residues 721 to 730 are compositionally biased toward low complexity; that stretch reads LPGDAGREGF. Residues 752 to 766 show a composition bias toward pro residues; sequence DGSPGPIGLPGPDGP. Low complexity-rich tracts occupy residues 769–778, 813–823, 831–844, 1302–1328, and 1400–1421; these read ERGLPGEVLG, MPGMPGLKGQP, QPGL…HGFP, GSAA…KGWA, and QPGT…EMGP. A Collagen IV NC1 domain is found at 1489–1712; that stretch reads GYLLVKHSQT…SRCQVCMKNL (224 aa). At tyrosine 1490 the chain carries 3'-bromotyrosine. 6 cysteine pairs are disulfide-bonded: cysteine 1504/cysteine 1593, cysteine 1537/cysteine 1590, cysteine 1549/cysteine 1555, cysteine 1612/cysteine 1708, cysteine 1646/cysteine 1705, and cysteine 1658/cysteine 1665.

It belongs to the type IV collagen family. In terms of assembly, there are six type IV collagen isoforms, alpha 1(IV)-alpha 6(IV), each of which can form a triple helix structure with 2 other chains to generate type IV collagen network. Interacts with EFEMP2. In terms of processing, prolines at the third position of the tripeptide repeating unit (G-X-Y) are hydroxylated in some or all of the chains. Type IV collagens contain numerous cysteine residues which are involved in inter- and intramolecular disulfide bonding. 12 of these, located in the NC1 domain, are conserved in all known type IV collagens. Post-translationally, the trimeric structure of the NC1 domains is stabilized by covalent bonds between Lys and Met residues. In terms of processing, proteolytic processing produces the C-terminal NC1 peptide, canstatin.

The protein resides in the secreted. Its subcellular location is the extracellular space. It is found in the extracellular matrix. It localises to the basement membrane. In terms of biological role, type IV collagen is the major structural component of glomerular basement membranes (GBM), forming a 'chicken-wire' meshwork together with laminins, proteoglycans and entactin/nidogen. Functionally, canstatin, a cleavage product corresponding to the collagen alpha 2(IV) NC1 domain, possesses both anti-angiogenic and anti-tumor cell activity. It inhibits proliferation and migration of endothelial cells, reduces mitochondrial membrane potential, and induces apoptosis. Specifically induces Fas-dependent apoptosis and activates procaspase-8 and -9 activity. Ligand for alphavbeta3 and alphavbeta5 integrins. The protein is Collagen alpha-2(IV) chain of Homo sapiens (Human).